The primary structure comprises 489 residues: Penton protein (489 aa).

Belongs to the adenoviridae penton family. In terms of assembly, interacts with the fiber protein (via N-terminal tail region). Interacts with the capsid vertex protein; this interaction binds the penton base to neighboring peripentonal hexons.

The protein localises to the virion. The protein resides in the host nucleus. Major capsid protein that self-associates to form penton base pentamers, each in the shape of a pentagon, situated at the 12 vertices of the pseudo T=25 capsid. Involved in virus secondary attachment to host cell after initial attachment by the fiber protein, and in endocytosis of virions. As the virus enters the host cell, penton proteins are shed concomitant with virion acidification in the endosome. The chain is Penton protein from Murine adenovirus A serotype 1 (MAdV-1).